Reading from the N-terminus, the 460-residue chain is Endoglucanase 2 (460 aa).

The N-terminal stretch at 1–32 is a signal peptide; that stretch reads MIKGSSLKRIKSLVMMAIFSVSIITTAIVSSA. E99 (proton donor) is an active-site residue. Catalysis depends on D155, which acts as the Nucleophile. The Dockerin domain maps to 400 to 460; it reads QQGLKGDVNN…FAQLKVKLLN (61 aa).

This sequence belongs to the glycosyl hydrolase 8 (cellulase D) family.

The enzyme catalyses Endohydrolysis of (1-&gt;4)-beta-D-glucosidic linkages in cellulose, lichenin and cereal beta-D-glucans.. The sequence is that of Endoglucanase 2 (celB) from Ruminiclostridium josui (Clostridium josui).